A 152-amino-acid polypeptide reads, in one-letter code: Protein ripply3 (152 aa).

A compositionally biased stretch (basic and acidic residues) spans 1-24; the sequence is MRPEAAGVREARGRLCHCPGDDPG. Disordered regions lie at residues 1 to 76 and 113 to 152; these read MRPE…GAFG and FYNDDSESGSEEEQEEEAQPNHLQCLEAEVRDSAQEERAE. The short motif at 40-43 is the WRPW motif element; that stretch reads WRPW. Residues 79–114 form a ripply homology domain region; the sequence is HPVRLYLPVSKRQEYLQSSGEKVLASFPVQATIHFY. The segment covering 116-130 has biased composition (acidic residues); that stretch reads DDSESGSEEEQEEEA. The segment covering 140-152 has biased composition (basic and acidic residues); the sequence is AEVRDSAQEERAE.

The protein belongs to the ripply family. In terms of assembly, interacts with TBX1.

It is found in the nucleus. Acts as a transcriptional corepressor. Negative regulator of the transcriptional activity of TBX1. Plays a role in the development of the pharyngeal apparatus and derivatives. The polypeptide is Protein ripply3 (Ripply3) (Mus musculus (Mouse)).